The following is a 101-amino-acid chain: Cell division suppressor protein YneA (101 aa).

The LysM domain maps to 35-86; that stretch reads MTVTVASGDTLWGLAKQYEPAHGLSPDEFIRWVVDVNRLPSSRLTAGEQIVI.

It belongs to the YneA family.

The protein localises to the cytoplasm. In terms of biological role, inhibits cell division during the SOS response. Affects a later stage of the cell division protein assembly, after the assembly of the Z ring, by probably suppressing recruitment of FtsL and/or DivIC to the division machinery. This is Cell division suppressor protein YneA from Geobacillus thermodenitrificans (strain NG80-2).